The following is a 239-amino-acid chain: Probable transcriptional regulatory protein BAA_0622 (239 aa).

The protein belongs to the TACO1 family. YeeN subfamily.

It is found in the cytoplasm. The sequence is that of Probable transcriptional regulatory protein BAA_0622 from Bacillus anthracis (strain A0248).